We begin with the raw amino-acid sequence, 198 residues long: Guanylate kinase (198 aa).

The Guanylate kinase-like domain maps to 6-192 (KSIVIFTGPS…AAQEIREILH (187 aa)). 13-20 (GPSGVGKG) contacts ATP.

This sequence belongs to the guanylate kinase family.

The protein resides in the cytoplasm. It catalyses the reaction GMP + ATP = GDP + ADP. Its function is as follows. Essential for recycling GMP and indirectly, cGMP. In Mycoplasmopsis synoviae (strain 53) (Mycoplasma synoviae), this protein is Guanylate kinase.